Consider the following 474-residue polypeptide: MSKKLLIKTWGCQMNEYDSSKMADLLNAANGYELTEEPEEADVLLLNTCSIREKAQEKVFHQLGRWKTLKDKKPGVVIGVGGCVATQEGDHIRQRAPYVDVIFGPQTLHRLPEMIKQSQSDEAPVMDISFPEIEKFDRLPEPRAEGATAFVSIMEGCSKYCTYCVVPYTRGEEVSRPMDDVLFEIAQLADQGVREVNLLGQNVNAYRGPMHDGEICSFAELLRLVASIDGIDRIRFTTSHPLEFTDDIIAVYEDTPELVSFLHLPVQSGSDRVLTMMKRPHTGIEYKSIIRKLRKARPDIQISSDFIVGFPGETDKDFQDTMKLIKDVDFDMSFSFIFSPRPGTPAADYPCDLSEQVKKERLYELQQTVNTQAMRYSRQMLDTEQRVLVEGPSKKNLMELRARTENNRVVNFEGSADLIGQFVDVKITDVFANSLRGELVRTEKDMDLRSVISPTQMMAKTRREDELGVATFTP.

Residues 3–120 (KKLLIKTWGC…LPEMIKQSQS (118 aa)) enclose the MTTase N-terminal domain. Residues Cys12, Cys49, Cys83, Cys157, Cys161, and Cys164 each contribute to the [4Fe-4S] cluster site. One can recognise a Radical SAM core domain in the interval 143 to 375 (RAEGATAFVS…QQTVNTQAMR (233 aa)). The TRAM domain occupies 378–441 (RQMLDTEQRV…ANSLRGELVR (64 aa)).

Belongs to the methylthiotransferase family. MiaB subfamily. Monomer. [4Fe-4S] cluster serves as cofactor.

The protein resides in the cytoplasm. It carries out the reaction N(6)-dimethylallyladenosine(37) in tRNA + (sulfur carrier)-SH + AH2 + 2 S-adenosyl-L-methionine = 2-methylsulfanyl-N(6)-dimethylallyladenosine(37) in tRNA + (sulfur carrier)-H + 5'-deoxyadenosine + L-methionine + A + S-adenosyl-L-homocysteine + 2 H(+). Catalyzes the methylthiolation of N6-(dimethylallyl)adenosine (i(6)A), leading to the formation of 2-methylthio-N6-(dimethylallyl)adenosine (ms(2)i(6)A) at position 37 in tRNAs that read codons beginning with uridine. This Vibrio campbellii (strain ATCC BAA-1116) protein is tRNA-2-methylthio-N(6)-dimethylallyladenosine synthase.